A 469-amino-acid chain; its full sequence is Neuraminidase (469 aa).

Topologically, residues 1 to 12 (MNTNQRIITIGT) are intravirion. An involved in apical transport and lipid raft association region spans residues 11-33 (GTICLIVGIISLLLQIGNIILLW). A helical membrane pass occupies residues 13-33 (ICLIVGIISLLLQIGNIILLW). The Virion surface portion of the chain corresponds to 34 to 469 (MSHSIQTGEK…GADLPFTIDK (436 aa)). Positions 36–90 (HSIQTGEKSHPKVCNQSVITYENNTWVNQTYVNISNTNIAAGQGVTPIILAGNSS) are hypervariable stalk region. 5 N-linked (GlcNAc...) asparagine; by host glycosylation sites follow: Asn50, Asn58, Asn63, Asn68, and Asn88. The tract at residues 91–469 (LCPISGWAIY…GADLPFTIDK (379 aa)) is head of neuraminidase. 8 cysteine pairs are disulfide-bonded: Cys92/Cys417, Cys124/Cys129, Cys184/Cys231, Cys233/Cys238, Cys279/Cys292, Cys281/Cys290, Cys318/Cys335, and Cys421/Cys446. A substrate-binding site is contributed by Arg118. N-linked (GlcNAc...) asparagine; by host glycosylation is present at Asn146. Asp151 acts as the Proton donor/acceptor in catalysis. Arg152 lines the substrate pocket. The N-linked (GlcNAc...) asparagine; by host glycan is linked to Asn235. 277–278 (EE) lines the substrate pocket. Arg293 is a binding site for substrate. Asp294, Asp324, and Asn344 together coordinate Ca(2+). Arg368 is a substrate binding site. Residue Tyr402 is the Nucleophile of the active site.

Belongs to the glycosyl hydrolase 34 family. In terms of assembly, homotetramer. Ca(2+) serves as cofactor. In terms of processing, N-glycosylated.

The protein localises to the virion membrane. It localises to the host apical cell membrane. It catalyses the reaction Hydrolysis of alpha-(2-&gt;3)-, alpha-(2-&gt;6)-, alpha-(2-&gt;8)- glycosidic linkages of terminal sialic acid residues in oligosaccharides, glycoproteins, glycolipids, colominic acid and synthetic substrates.. Its activity is regulated as follows. Inhibited by the neuraminidase inhibitors zanamivir (Relenza) and oseltamivir (Tamiflu). These drugs interfere with the release of progeny virus from infected cells and are effective against all influenza strains. Resistance to neuraminidase inhibitors is quite rare. Functionally, catalyzes the removal of terminal sialic acid residues from viral and cellular glycoconjugates. Cleaves off the terminal sialic acids on the glycosylated HA during virus budding to facilitate virus release. Additionally helps virus spread through the circulation by further removing sialic acids from the cell surface. These cleavages prevent self-aggregation and ensure the efficient spread of the progeny virus from cell to cell. Otherwise, infection would be limited to one round of replication. Described as a receptor-destroying enzyme because it cleaves a terminal sialic acid from the cellular receptors. May facilitate viral invasion of the upper airways by cleaving the sialic acid moieties on the mucin of the airway epithelial cells. Likely to plays a role in the budding process through its association with lipid rafts during intracellular transport. May additionally display a raft-association independent effect on budding. Plays a role in the determination of host range restriction on replication and virulence. Sialidase activity in late endosome/lysosome traffic seems to enhance virus replication. The chain is Neuraminidase from Influenza A virus (strain A/New Jersey/8/1976 H1N1).